The following is a 309-amino-acid chain: Electron transfer flavoprotein subunit alpha (309 aa).

253–281 is a binding site for FAD; that stretch reads LYIAVGISGAIQHLAGMKDSKVIVAINKD.

It belongs to the ETF alpha-subunit/FixB family. In terms of assembly, heterodimer of an alpha and a beta subunit. The cofactor is FAD.

Its function is as follows. The electron transfer flavoprotein serves as a specific electron acceptor for other dehydrogenases. It transfers the electrons to the main respiratory chain via ETF-ubiquinone oxidoreductase (ETF dehydrogenase). This chain is Electron transfer flavoprotein subunit alpha (etfA), found in Pseudomonas aeruginosa (strain ATCC 15692 / DSM 22644 / CIP 104116 / JCM 14847 / LMG 12228 / 1C / PRS 101 / PAO1).